Consider the following 363-residue polypeptide: Chorismate synthase (363 aa).

NADP(+) is bound by residues arginine 48 and arginine 54. FMN is bound by residues 125–127 (RSS), 238–239 (NA), glycine 278, 293–297 (KPTSS), and arginine 319.

Belongs to the chorismate synthase family. As to quaternary structure, homotetramer. FMNH2 is required as a cofactor.

It carries out the reaction 5-O-(1-carboxyvinyl)-3-phosphoshikimate = chorismate + phosphate. It functions in the pathway metabolic intermediate biosynthesis; chorismate biosynthesis; chorismate from D-erythrose 4-phosphate and phosphoenolpyruvate: step 7/7. Its function is as follows. Catalyzes the anti-1,4-elimination of the C-3 phosphate and the C-6 proR hydrogen from 5-enolpyruvylshikimate-3-phosphate (EPSP) to yield chorismate, which is the branch point compound that serves as the starting substrate for the three terminal pathways of aromatic amino acid biosynthesis. This reaction introduces a second double bond into the aromatic ring system. The polypeptide is Chorismate synthase (Alcanivorax borkumensis (strain ATCC 700651 / DSM 11573 / NCIMB 13689 / SK2)).